Consider the following 455-residue polypeptide: UDP-N-acetylmuramate--L-alanine ligase (455 aa).

109 to 115 is a binding site for ATP; the sequence is GTHGKTT.

Belongs to the MurCDEF family.

It localises to the cytoplasm. It carries out the reaction UDP-N-acetyl-alpha-D-muramate + L-alanine + ATP = UDP-N-acetyl-alpha-D-muramoyl-L-alanine + ADP + phosphate + H(+). The protein operates within cell wall biogenesis; peptidoglycan biosynthesis. Functionally, cell wall formation. In Caldicellulosiruptor saccharolyticus (strain ATCC 43494 / DSM 8903 / Tp8T 6331), this protein is UDP-N-acetylmuramate--L-alanine ligase.